Here is a 638-residue protein sequence, read N- to C-terminus: Golgi integral membrane protein 4 (638 aa).

The Cytoplasmic segment spans residues 1–12; the sequence is MGNGMCSRRQKR. The chain crosses the membrane as a helical; Signal-anchor for type II membrane protein span at residues 13–33; it reads IFQALACLAVAIGFVYGAMLN. The Lumenal segment spans residues 34-638; it reads YHLQNDLKKA…GVKNKRRAEM (605 aa). 2 golgi targeting regions span residues 38–107 and 176–220; these read NDLK…RQDS and YNLR…SSLR. Residues 66–216 are a coiled coil; it reads EHRSRLEKSL…VQLKKALNKM (151 aa). The segment at 80-175 is endosome targeting; it reads LEHKKAKEDF…QEHSKLKESI (96 aa). 3 disordered regions span residues 217 to 245, 280 to 415, and 455 to 638; these read SSLR…EHAT, RVKT…QQDL, and KQAE…RAEM. Basic and acidic residues-rich tracts occupy residues 301–316 and 323–332; these read ATEH…KKEL and QVGKPERLVE. A compositionally biased stretch (acidic residues) spans 348-361; that stretch reads EDDALEGNNEEQKE. Composition is skewed to basic and acidic residues over residues 402–414, 455–467, and 510–521; these read QMEE…EQQD, KQAE…HDIV, and AESREGQEKAAA. Acidic residues-rich tracts occupy residues 534–553 and 577–593; these read GEDE…PDEN and QQED…EEEE. Residues 594–615 are compositionally biased toward basic and acidic residues; the sequence is RQIGAEREPDAQQEENKERNEE. Residues 616–626 show a composition bias toward acidic residues; sequence NYEEEEEEEDG.

This sequence belongs to the GOLIM4 family.

It localises to the golgi apparatus. The protein resides in the golgi stack membrane. Its subcellular location is the endosome membrane. May play a role in endosome to Golgi protein trafficking. This Xenopus tropicalis (Western clawed frog) protein is Golgi integral membrane protein 4 (golim4).